Here is a 335-residue protein sequence, read N- to C-terminus: Methionine aminopeptidase 1D, mitochondrial (335 aa).

The N-terminal 19 residues, 1-19, are a transit peptide targeting the mitochondrion; the sequence is MAAPIGVPLLVRGGCQRIL. H161 is a binding site for substrate. A divalent metal cation contacts are provided by D178, D189, and H252. Residue H259 coordinates substrate. 2 residues coordinate a divalent metal cation: E284 and E315.

This sequence belongs to the peptidase M24A family. Methionine aminopeptidase type 1 subfamily. Requires Co(2+) as cofactor. The cofactor is Zn(2+). Mn(2+) is required as a cofactor. It depends on Fe(2+) as a cofactor.

It is found in the mitochondrion. The catalysed reaction is Release of N-terminal amino acids, preferentially methionine, from peptides and arylamides.. In terms of biological role, removes the N-terminal methionine from nascent proteins. The N-terminal methionine is often cleaved when the second residue in the primary sequence is small and uncharged (Met-Ala-, Cys, Gly, Pro, Ser, Thr, or Val). Requires deformylation of the N(alpha)-formylated initiator methionine before it can be hydrolyzed. This is Methionine aminopeptidase 1D, mitochondrial (Metap1d) from Mus musculus (Mouse).